The sequence spans 107 residues: N(4)-acetylcytidine amidohydrolase (107 aa).

An ASCH domain is found at 6-102 (TFYRRFQADI…RLYVISFSLV (97 aa)). K20 serves as the catalytic Proton acceptor. Catalysis depends on T23, which acts as the Nucleophile. E73 serves as the catalytic Proton donor.

Belongs to the N(4)-acetylcytidine amidohydrolase family.

It catalyses the reaction N(4)-acetylcytidine + H2O = cytidine + acetate + H(+). The enzyme catalyses N(4)-acetyl-2'-deoxycytidine + H2O = 2'-deoxycytidine + acetate + H(+). The catalysed reaction is N(4)-acetylcytosine + H2O = cytosine + acetate + H(+). Functionally, catalyzes the hydrolysis of N(4)-acetylcytidine (ac4C). This Edwardsiella ictaluri (strain 93-146) protein is N(4)-acetylcytidine amidohydrolase.